A 411-amino-acid chain; its full sequence is MAEKTEKPTAKKLRDAAKKGQTFKARDIVALIVIATGALAAPALVDLTRIAAEFVRIASTGAQPNPGAYAFAWAKLFLRIAAPFVLLCAAAGALPSLVQSRFTLAVESIRFDLTALDPVKGMKRLFSWRSAKDAVKALLYVGVFALTVRVFAGLYHADVFGLFRARPALLGHMWIVLTVRLVLLFLLCALPVLILDAAVEYFLYHRELKMDKHEVKQEYKESEGNHEIKSKRREIHQELLSEEIKANVEQSDFIVANPTHIAIGVYVNPDIVPIPFVSVRETNARALAVIRHAEACGVPVVRNVALARSIYRNSPRRYSFVSHDDIDGVMRVLIWLGEVEAANRGGPPPETRAPTSAEPQARDGVAPPGDACADNAFPDDAPPGAAAPNAGSPDGPAPDGGAPARTGDQNA.

4 helical membrane-spanning segments follow: residues 28-48, 80-100, 137-157, and 175-195; these read IVAL…VDLT, IAAP…LVQS, ALLY…LYHA, and IVLT…VLIL. A disordered region spans residues 341 to 411; sequence AANRGGPPPE…APARTGDQNA (71 aa). Positions 370-404 are enriched in low complexity; the sequence is DACADNAFPDDAPPGAAAPNAGSPDGPAPDGGAPA.

Belongs to the type III secretion exporter family.

The protein localises to the cell membrane. Functionally, part of the bsa type III secretion system, is involved in the intracellular replication of invading bacteria inside the host cell. Probably necessary for the lysis of the vacuole membrane and escape into the host cell cytoplasm. The chain is Secretion apparatus protein BsaZ (bsaZ) from Burkholderia pseudomallei (strain 1026b).